Here is a 375-residue protein sequence, read N- to C-terminus: Stimulator of interferon genes protein 2 (375 aa).

Helical transmembrane passes span 30-50, 60-80, 114-134, and 144-164; these read TATV…LLAV, IHFL…GELV, AGSI…VLYE, and YPIL…LVGL. 3 residues coordinate 2',3'-cGAMP: Tyr195, Arg256, and Arg262.

Belongs to the STING family.

The protein localises to the membrane. In terms of biological role, facilitator of innate immune signaling that acts as a sensor of second messenger signals produced by cyclic GMP-AMP synthase-like receptors (cGLRs) and promotes the production of type I interferon. Innate immune response is triggered in response to nucleotides from viruses and bacteria delivered to the cytoplasm. Acts by binding cyclic dinucleotides: recognizes and binds 2'-3' linked cGAMP (2'-3'-cGAMP), a second messengers produced by cGLRs in response to nucleotides in the cytosol, such as double-stranded RNA (dsRNA). Upon binding to 2'-3'-cGAMP, oligomerizes and promotes the recruitment and subsequent activation of the transcription factor IRF3 to induce expression of type I interferon. This is Stimulator of interferon genes protein 2 from Stylophora pistillata (Smooth cauliflower coral).